The following is an 80-amino-acid chain: CLAVATA3/ESR (CLE)-related protein 14 (80 aa).

The first 26 residues, M1–A26, serve as a signal peptide directing secretion. Hydroxyproline occurs at positions 71 and 74. A glycan (O-linked (Ara...) hydroxyproline) is linked at P74.

This sequence belongs to the CLV3/ESR signal peptide family. In terms of assembly, interacts with the extracellular leucine-rich repeat region of CLV2 and PEPR2. In terms of processing, the O-glycosylation (arabinosylation) of the hydroxyproline Pro-74 enhances binding affinity of the CLE14p peptide for its receptor. Mostly expressed in roots, and, to a lower extent, in seedlings and leaves. Expressed in the primary root tip under Pi deficiency.

It localises to the secreted. The protein localises to the extracellular space. Functionally, extracellular signal peptide that regulates cell fate. Represses root apical meristem maintenance. Acts as an elicitor of the root meristem differentiation through the CLV2/CRN complex signaling pathway. Inhibits irreversibly root growth by reducing cell division rates in the root apical meristem. Regulates the transition of protophloem cells from proliferation to differentiation, thus impinging on postembryonic growth capacity of the root meristem; this signaling pathway requires CRN and CLV2. This chain is CLAVATA3/ESR (CLE)-related protein 14, found in Arabidopsis thaliana (Mouse-ear cress).